A 363-amino-acid polypeptide reads, in one-letter code: UDP-3-O-acylglucosamine N-acyltransferase (363 aa).

His-259 serves as the catalytic Proton acceptor.

This sequence belongs to the transferase hexapeptide repeat family. LpxD subfamily. As to quaternary structure, homotrimer.

It carries out the reaction a UDP-3-O-[(3R)-3-hydroxyacyl]-alpha-D-glucosamine + a (3R)-hydroxyacyl-[ACP] = a UDP-2-N,3-O-bis[(3R)-3-hydroxyacyl]-alpha-D-glucosamine + holo-[ACP] + H(+). The protein operates within bacterial outer membrane biogenesis; LPS lipid A biosynthesis. Its function is as follows. Catalyzes the N-acylation of UDP-3-O-acylglucosamine using 3-hydroxyacyl-ACP as the acyl donor. Is involved in the biosynthesis of lipid A, a phosphorylated glycolipid that anchors the lipopolysaccharide to the outer membrane of the cell. This is UDP-3-O-acylglucosamine N-acyltransferase from Ruegeria pomeroyi (strain ATCC 700808 / DSM 15171 / DSS-3) (Silicibacter pomeroyi).